The sequence spans 243 residues: 3-deoxy-manno-octulosonate cytidylyltransferase (243 aa).

It belongs to the KdsB family.

Its subcellular location is the cytoplasm. It catalyses the reaction 3-deoxy-alpha-D-manno-oct-2-ulosonate + CTP = CMP-3-deoxy-beta-D-manno-octulosonate + diphosphate. It functions in the pathway nucleotide-sugar biosynthesis; CMP-3-deoxy-D-manno-octulosonate biosynthesis; CMP-3-deoxy-D-manno-octulosonate from 3-deoxy-D-manno-octulosonate and CTP: step 1/1. Its pathway is bacterial outer membrane biogenesis; lipopolysaccharide biosynthesis. In terms of biological role, activates KDO (a required 8-carbon sugar) for incorporation into bacterial lipopolysaccharide in Gram-negative bacteria. This chain is 3-deoxy-manno-octulosonate cytidylyltransferase, found in Bartonella bacilliformis (strain ATCC 35685 / KC583 / Herrer 020/F12,63).